A 360-amino-acid chain; its full sequence is Hyaluronan and proteoglycan link protein 3 (360 aa).

Residues 1-17 (MGLLLLVPLLLLPGSYG) form the signal peptide. The 117-residue stretch at 48–164 (KLVVETPEET…ESGLVELELR (117 aa)) folds into the Ig-like V-type domain. Intrachain disulfides connect cysteine 70/cysteine 146, cysteine 188/cysteine 259, cysteine 212/cysteine 233, cysteine 286/cysteine 356, and cysteine 311/cysteine 332. 2 consecutive Link domains span residues 166–261 (VVFP…FCFA) and 266–358 (GRVY…YCYR).

This sequence belongs to the HAPLN family. In terms of tissue distribution, widely expressed with highest levels in spleen and placenta.

The protein resides in the secreted. It is found in the extracellular space. Its subcellular location is the extracellular matrix. May function in hyaluronic acid binding. The chain is Hyaluronan and proteoglycan link protein 3 (HAPLN3) from Homo sapiens (Human).